Consider the following 158-residue polypeptide: Ribosome maturation factor RimP (158 aa).

The protein belongs to the RimP family.

The protein localises to the cytoplasm. Functionally, required for maturation of 30S ribosomal subunits. The chain is Ribosome maturation factor RimP from Pediococcus pentosaceus (strain ATCC 25745 / CCUG 21536 / LMG 10740 / 183-1w).